The chain runs to 256 residues: 5-keto-4-deoxy-D-glucarate aldolase (256 aa).

Residue His50 is the Proton acceptor of the active site. Gln151 is a binding site for substrate. Glu153 contributes to the Mg(2+) binding site. 2 residues coordinate substrate: Ser178 and Asp179. Position 179 (Asp179) interacts with Mg(2+).

The protein belongs to the HpcH/HpaI aldolase family. KDGluc aldolase subfamily. Homohexamer; trimer of dimers. Requires Mg(2+) as cofactor.

The catalysed reaction is 5-dehydro-4-deoxy-D-glucarate = 2-hydroxy-3-oxopropanoate + pyruvate. The enzyme catalyses 2-dehydro-3-deoxy-D-glucarate = 2-hydroxy-3-oxopropanoate + pyruvate. Its pathway is carbohydrate acid metabolism; galactarate degradation; D-glycerate from galactarate: step 2/3. Catalyzes the reversible retro-aldol cleavage of both 5-keto-4-deoxy-D-glucarate and 2-keto-3-deoxy-D-glucarate to pyruvate and tartronic semialdehyde. The sequence is that of 5-keto-4-deoxy-D-glucarate aldolase from Escherichia coli (strain K12 / DH10B).